A 526-amino-acid chain; its full sequence is Peptide chain release factor 3 (526 aa).

The 270-residue stretch at 8–277 (GKRRTFAIIS…GLTEWAPAPQ (270 aa)) folds into the tr-type G domain. GTP contacts are provided by residues 17 to 24 (SHPDAGKT), 85 to 89 (DTPGH), and 139 to 142 (NKMD).

It belongs to the TRAFAC class translation factor GTPase superfamily. Classic translation factor GTPase family. PrfC subfamily.

The protein resides in the cytoplasm. In terms of biological role, increases the formation of ribosomal termination complexes and stimulates activities of RF-1 and RF-2. It binds guanine nucleotides and has strong preference for UGA stop codons. It may interact directly with the ribosome. The stimulation of RF-1 and RF-2 is significantly reduced by GTP and GDP, but not by GMP. The polypeptide is Peptide chain release factor 3 (Aliivibrio salmonicida (strain LFI1238) (Vibrio salmonicida (strain LFI1238))).